Here is a 335-residue protein sequence, read N- to C-terminus: Atypical chemokine receptor 1 (335 aa).

The Extracellular portion of the chain corresponds to 1 to 62; the sequence is MGNCLHPAEL…CNLLDDSALP (62 aa). Residues Asn-16, Asn-26, and Asn-32 are each glycosylated (N-linked (GlcNAc...) asparagine). 2 cysteine pairs are disulfide-bonded: Cys-50–Cys-275 and Cys-128–Cys-194. The chain crosses the membrane as a helical span at residues 63–83; the sequence is FFILVSVLGILASGTVLFMFF. Residues 84 to 94 lie on the Cytoplasmic side of the membrane; it reads RPLFHWQLCPG. Residues 95-115 form a helical membrane-spanning segment; it reads WPVLAQLAVGSALFSIVVPIL. The Extracellular segment spans residues 116 to 128; it reads APGLGNTRSSALC. The chain crosses the membrane as a helical span at residues 129–152; that stretch reads SLGYCVWYGSAFAQALLLGCHASL. The Cytoplasmic portion of the chain corresponds to 153-165; that stretch reads GPKLGAGQVPGLT. Residues 166–186 form a helical membrane-spanning segment; it reads LGLSVGLWGVAALLTLPITLA. Over 187-206 the chain is Extracellular; the sequence is SGASGGLCTPAYSMELKALQ. A helical membrane pass occupies residues 207–227; it reads ATHAVACLAVFVLLPLGLFGA. The Cytoplasmic portion of the chain corresponds to 228-243; the sequence is KGLKKALGMGPGPWMN. A helical transmembrane segment spans residues 244–264; that stretch reads ILWAWFIFWWPHGVVLGLDFL. Residues 265–286 are Extracellular-facing; that stretch reads VRSKLLLLSTCLAQQALDLLLN. The helical transmembrane segment at 287–307 threads the bilayer; it reads LAEALAILHCVATPLLLALFC. The Cytoplasmic segment spans residues 308 to 335; that stretch reads HQATRTLLPSLPLPEGWSSHLDTLGSES.

Belongs to the G-protein coupled receptor 1 family. Atypical chemokine receptor subfamily. (Microbial infection) Interacts (via N-terminal extracellular domain) with Plasmodium knowlesi Duffy receptor alpha form (DBPalpha) (via region II).

The protein resides in the early endosome. The protein localises to the recycling endosome. It is found in the membrane. Functionally, atypical chemokine receptor that controls chemokine levels and localization via high-affinity chemokine binding that is uncoupled from classic ligand-driven signal transduction cascades, resulting instead in chemokine sequestration, degradation, or transcytosis. Also known as interceptor (internalizing receptor) or chemokine-scavenging receptor or chemokine decoy receptor. Has a promiscuous chemokine-binding profile, interacting with inflammatory chemokines of both the CXC and the CC subfamilies but not with homeostatic chemokines. Acts as a receptor for chemokines including CCL2, CCL5, CCL7, CCL11, CCL13, CCL14, CCL17, CXCL5, CXCL6, IL8/CXCL8, CXCL11, GRO, RANTES, MCP-1 and TARC. May regulate chemokine bioavailability and, consequently, leukocyte recruitment through two distinct mechanisms: when expressed in endothelial cells, it sustains the abluminal to luminal transcytosis of tissue-derived chemokines and their subsequent presentation to circulating leukocytes; when expressed in erythrocytes, serves as blood reservoir of cognate chemokines but also as a chemokine sink, buffering potential surges in plasma chemokine levels. (Microbial infection) Acts as a receptor for the malaria parasite Plasmodium knowlesi. The sequence is that of Atypical chemokine receptor 1 (ACKR1) from Macaca mulatta (Rhesus macaque).